Here is an 87-residue protein sequence, read N- to C-terminus: UPF0250 protein YE3006 (87 aa).

Belongs to the UPF0250 family.

In Yersinia enterocolitica serotype O:8 / biotype 1B (strain NCTC 13174 / 8081), this protein is UPF0250 protein YE3006.